Consider the following 262-residue polypeptide: MDGGHSPDRHAAAAAGEPVRSRWTPKPEQILILESIFNSGMVNPPKDETVRIRKLLERFGAVGDANVFYWFQNRRSRSRRRQRQLQAQAQAAAAAASSGSPPTASSGGLAPGHAGSPASSLGMFAHGAAGYSSSSSSSWPSSPPSVGMMMGDVDYGGGGDDLFAISRQMGYMDGGGGSSSSAAAGQHQQQQLYYSCQPATMTVFINGVATEVPRGPIDLRSMFGQDVMLVHSTGALLPANEYGILLHSLQMGESYFLVTRSS.

Residues Met-1–Ala-11 are compositionally biased toward basic and acidic residues. Disordered regions lie at residues Met-1 to Ser-21 and Arg-79 to Gly-115. Positions Pro-18–Gln-82 form a DNA-binding region, homeobox. Low complexity predominate over residues Gln-84–Gly-112.

Belongs to the WUS homeobox family. In terms of assembly, interacts with ERF3.

The protein localises to the nucleus. Transcription factor which may be involved in developmental processes. Promotes the development of crown roots (both initiation and elongation), main components of the fibrous root system, by regulating the expression of genes required for crown root development and hormone-responsive genes involved in cytokinin (e.g. RR1, RR2, RR3 and RR4) and auxin (e.g. IAA5, IAA11, IAA23 and IAA31) signaling. This Oryza sativa subsp. indica (Rice) protein is WUSCHEL-related homeobox 11.